The chain runs to 495 residues: L-2,4-diaminobutyrate decarboxylase (495 aa).

N6-(pyridoxal phosphate)lysine is present on Lys-312.

Belongs to the group II decarboxylase family. It depends on pyridoxal 5'-phosphate as a cofactor.

The enzyme catalyses L-2,4-diaminobutanoate + H(+) = propane-1,3-diamine + CO2. The protein operates within siderophore biosynthesis; rhizobactin biosynthesis. This is L-2,4-diaminobutyrate decarboxylase (rhbB) from Rhizobium meliloti (strain 1021) (Ensifer meliloti).